We begin with the raw amino-acid sequence, 236 residues long: Leucyl/phenylalanyl-tRNA--protein transferase (236 aa).

Belongs to the L/F-transferase family.

The protein localises to the cytoplasm. It carries out the reaction N-terminal L-lysyl-[protein] + L-leucyl-tRNA(Leu) = N-terminal L-leucyl-L-lysyl-[protein] + tRNA(Leu) + H(+). The catalysed reaction is N-terminal L-arginyl-[protein] + L-leucyl-tRNA(Leu) = N-terminal L-leucyl-L-arginyl-[protein] + tRNA(Leu) + H(+). The enzyme catalyses L-phenylalanyl-tRNA(Phe) + an N-terminal L-alpha-aminoacyl-[protein] = an N-terminal L-phenylalanyl-L-alpha-aminoacyl-[protein] + tRNA(Phe). Functions in the N-end rule pathway of protein degradation where it conjugates Leu, Phe and, less efficiently, Met from aminoacyl-tRNAs to the N-termini of proteins containing an N-terminal arginine or lysine. This is Leucyl/phenylalanyl-tRNA--protein transferase from Shewanella sp. (strain ANA-3).